Reading from the N-terminus, the 719-residue chain is UvrABC system protein B (719 aa).

Positions 49 to 435 constitute a Helicase ATP-binding domain; that stretch reads RRINAGERDV…TGGEFVEQVI (387 aa). An ATP-binding site is contributed by 62-69; the sequence is GATGTGKS. A Beta-hairpin motif is present at residues 115-138; the sequence is YYDYYQPEAYIAQTDTYIEKDSSI. The region spanning 453-606 is the Helicase C-terminal domain; sequence QIDDLIGEIR…QIAYNEANGI (154 aa). The disordered stretch occupies residues 635–654; it reads GGSGRNASRGRRAQGEPGRA. The UVR domain maps to 674–709; the sequence is ADLIKDLTAQMMAAARDLQFELAARFRDEIADLKRE.

It belongs to the UvrB family. Forms a heterotetramer with UvrA during the search for lesions. Interacts with UvrC in an incision complex.

The protein localises to the cytoplasm. Functionally, the UvrABC repair system catalyzes the recognition and processing of DNA lesions. A damage recognition complex composed of 2 UvrA and 2 UvrB subunits scans DNA for abnormalities. Upon binding of the UvrA(2)B(2) complex to a putative damaged site, the DNA wraps around one UvrB monomer. DNA wrap is dependent on ATP binding by UvrB and probably causes local melting of the DNA helix, facilitating insertion of UvrB beta-hairpin between the DNA strands. Then UvrB probes one DNA strand for the presence of a lesion. If a lesion is found the UvrA subunits dissociate and the UvrB-DNA preincision complex is formed. This complex is subsequently bound by UvrC and the second UvrB is released. If no lesion is found, the DNA wraps around the other UvrB subunit that will check the other stand for damage. This chain is UvrABC system protein B, found in Mycobacterium tuberculosis (strain CDC 1551 / Oshkosh).